A 153-amino-acid chain; its full sequence is 3-hydroxyacyl-[acyl-carrier-protein] dehydratase FabZ (153 aa).

Residue His54 is part of the active site.

The protein belongs to the thioester dehydratase family. FabZ subfamily.

Its subcellular location is the cytoplasm. It carries out the reaction a (3R)-hydroxyacyl-[ACP] = a (2E)-enoyl-[ACP] + H2O. Functionally, involved in unsaturated fatty acids biosynthesis. Catalyzes the dehydration of short chain beta-hydroxyacyl-ACPs and long chain saturated and unsaturated beta-hydroxyacyl-ACPs. This is 3-hydroxyacyl-[acyl-carrier-protein] dehydratase FabZ from Chlamydia pneumoniae (Chlamydophila pneumoniae).